Here is a 485-residue protein sequence, read N- to C-terminus: Cysteine--tRNA ligase (485 aa).

Position 27 (cysteine 27) interacts with Zn(2+). Residues 29–39 carry the 'HIGH' region motif; the sequence is ITAYDFSHIGH. Positions 208, 233, and 237 each coordinate Zn(2+). The short motif at 265-269 is the 'KMSKS' region element; sequence KMSKS. ATP is bound at residue lysine 268.

The protein belongs to the class-I aminoacyl-tRNA synthetase family. As to quaternary structure, monomer. The cofactor is Zn(2+).

The protein localises to the cytoplasm. It carries out the reaction tRNA(Cys) + L-cysteine + ATP = L-cysteinyl-tRNA(Cys) + AMP + diphosphate. In Lawsonia intracellularis (strain PHE/MN1-00), this protein is Cysteine--tRNA ligase.